The following is a 130-amino-acid chain: Large ribosomal subunit protein bL12 (130 aa).

This sequence belongs to the bacterial ribosomal protein bL12 family. As to quaternary structure, homodimer. Part of the ribosomal stalk of the 50S ribosomal subunit. Forms a multimeric L10(L12)X complex, where L10 forms an elongated spine to which 2 to 4 L12 dimers bind in a sequential fashion. Binds GTP-bound translation factors.

Its function is as follows. Forms part of the ribosomal stalk which helps the ribosome interact with GTP-bound translation factors. Is thus essential for accurate translation. This Nostoc sp. (strain PCC 7120 / SAG 25.82 / UTEX 2576) protein is Large ribosomal subunit protein bL12.